The following is a 393-amino-acid chain: Interferon regulatory factor 9 (393 aa).

The segment at residues 9 to 116 is a DNA-binding region (IRF tryptophan pentad repeat); sequence TRKLRNWVVE…EPYKVYQLLP (108 aa). Disordered stretches follow at residues 120–151 and 163–202; these read VSGQPGTQKVPSKRQHSSVSSERKEEEDAMQN and LNNEEEGASGGAVHSDIGSSSSSSSPEPQEVTDTTEAPFQ. Ser-139 is subject to Phosphoserine.

Belongs to the IRF family. Interacts with STAT2 in the cytoplasm. Forms the interferon-stimulated gene factor 3 complex (ISGF3) with the heterodimer STAT1:STAT2; upon stimulation. In terms of assembly, (Microbial infection) Interacts with measles virus V protein; this interaction prevents the binding of IRF9 to STAT2 and thereby the type I interferon signaling pathway. Post-translationally, (Microbial infection) Ubiquitinated by Herpes simplex virus 2 E3 ubiquitin ligase ICP22.

The protein localises to the cytoplasm. It is found in the nucleus. In terms of biological role, transcription factor that plays an essential role in anti-viral immunity. It mediates signaling by type I IFNs (IFN-alpha and IFN-beta). Following type I IFN binding to cell surface receptors, Jak kinases (TYK2 and JAK1) are activated, leading to tyrosine phosphorylation of STAT1 and STAT2. IRF9/ISGF3G associates with the phosphorylated STAT1:STAT2 dimer to form a complex termed ISGF3 transcription factor, that enters the nucleus. ISGF3 binds to the IFN stimulated response element (ISRE) to activate the transcription of interferon stimulated genes, which drive the cell in an antiviral state. The sequence is that of Interferon regulatory factor 9 (IRF9) from Homo sapiens (Human).